Here is a 292-residue protein sequence, read N- to C-terminus: MMLPKEIMMPNDNPYALHRVKVLKVYSLTETEKLFLFRFEDPELAEKWTFKPGQFVQLTIPGVGEVPISICSSPMRKGFFELCIRKAGRVTTVVHRLKPGDTVLVRGPYGNGFPVDEWEGMDLLLIAAGLGTAPLRSVFLYAMDNRWKYGNITFINTARYGKDLLFYKELEAMKDLAEAENVKIIQSVTRDPNWPGLKGRPQQFIVEANTNPKNTAVAICGPPRMYKSVFEALINYGYRPENIFVTLERRMKCGIGKCGHCNVGTSTSWKYICKDGPVFTYFDIVSTPGLLD.

The region spanning tyrosine 15–valine 115 is the FAD-binding FR-type domain. [2Fe-2S] cluster is bound by residues cysteine 253, cysteine 258, cysteine 261, and cysteine 273.

In terms of assembly, heterotetramer of alpha, beta, gamma and delta subunits. The nickel-containing alpha and delta subunits constitute the hydrogenase activity. The beta and gamma subunits (flavin-containing dimer) constitute the sulfur reductase activity. FAD is required as a cofactor. Requires [2Fe-2S] cluster as cofactor.

Its subcellular location is the cytoplasm. It carries out the reaction n sulfur + H2 = (n-1) sulfur + hydrogen sulfide + H(+). Its activity is regulated as follows. Stimulated by rubredoxin at pH 7.6 but not ferredoxin. Functionally, part of a bifunctional enzyme complex that functions as an NADPH-dependent hydrogen-evolving hydrogenase with sulfur reducing activity. May play a role in hydrogen cycling during fermentative growth. Activity not exhibited with NAD. The beta and gamma subunits form the sulfur reducing component that catalyzes the cytoplasmic production of hydrogen sulfide in the presence of elemental sulfur. Not active in the presence of sodium sulfate, sodium sulfite, sodium thiosulfate or cysteine. This chain is Sulfhydrogenase 1 subunit gamma, found in Pyrococcus furiosus (strain ATCC 43587 / DSM 3638 / JCM 8422 / Vc1).